Here is a 256-residue protein sequence, read N- to C-terminus: Acetylglutamate kinase (256 aa).

Residues 40-41 (GG), arginine 62, and asparagine 154 contribute to the substrate site.

The protein belongs to the acetylglutamate kinase family. ArgB subfamily.

The protein localises to the cytoplasm. The catalysed reaction is N-acetyl-L-glutamate + ATP = N-acetyl-L-glutamyl 5-phosphate + ADP. It participates in amino-acid biosynthesis; L-arginine biosynthesis; N(2)-acetyl-L-ornithine from L-glutamate: step 2/4. Its function is as follows. Catalyzes the ATP-dependent phosphorylation of N-acetyl-L-glutamate. In Staphylococcus aureus (strain MRSA252), this protein is Acetylglutamate kinase.